The primary structure comprises 428 residues: Sulfite exporter TauE/SafE family protein 6 (428 aa).

A run of 11 helical transmembrane segments spans residues 1–21 (MKTL…NANQ), 61–81 (ALVV…ASGI), 82–102 (GDGF…LKAA), 105–125 (FSAF…HFGC), 128–148 (LIDY…VSVG), 149–169 (VICN…VFLM), 245–265 (YWIL…LALS), 294–314 (VMSF…GMII), 332–352 (TSFM…LLGM), 356–376 (EAAY…LVFA), and 388–408 (IIVF…ASFG).

It belongs to the 4-toluene sulfonate uptake permease (TSUP) (TC 2.A.102) family.

Its subcellular location is the membrane. The protein is Sulfite exporter TauE/SafE family protein 6 of Arabidopsis thaliana (Mouse-ear cress).